Reading from the N-terminus, the 78-residue chain is Small ribosomal subunit protein uS17 (78 aa).

This sequence belongs to the universal ribosomal protein uS17 family. In terms of assembly, part of the 30S ribosomal subunit.

Its function is as follows. One of the primary rRNA binding proteins, it binds specifically to the 5'-end of 16S ribosomal RNA. The protein is Small ribosomal subunit protein uS17 of Maricaulis maris (strain MCS10) (Caulobacter maris).